Here is a 157-residue protein sequence, read N- to C-terminus: Thioredoxin 2 (157 aa).

A signal peptide spans 1-23; the sequence is MKKYIFFFLFSFINFFFVYDVTC. The region spanning 46 to 157 is the Thioredoxin domain; the sequence is LRMFKKVPRL…DLIALIKKHL (112 aa). Residues cysteine 82 and cysteine 85 each act as nucleophile in the active site. Cysteine 82 and cysteine 85 form a disulfide bridge.

It belongs to the thioredoxin family. As to quaternary structure, monomer. Component of the Plasmodium translocon of exported proteins (PTEX) complex composed of HSP101, EXP2, PTEX150, PTEX88 and TRX2. Post-translationally, the disulfide bond between Cys-82 and Cys-85 acts as a redox-active center and is reduced by thioredoxin reductase TRXR.

Its subcellular location is the parasitophorous vacuole membrane. In terms of biological role, participates in various redox reactions through the reversible oxidation of its active center dithiol to a disulfide and catalyzes dithiol-disulfide exchange reactions. As part of the translocon PTEX complex, plays a role in the export of parasite proteins into the host erythrocyte. The translocon PTEX complex is a multi-protein machinery resident in the parasite parasitophorous vacuolar membrane, responsible for protein secretion into host cells. May contribute to the unfolding of proteins containing the PEXEL localization motif before their passage through the translocon or regulate the PTEX complex function. The protein is Thioredoxin 2 of Plasmodium falciparum (isolate 3D7).